Reading from the N-terminus, the 333-residue chain is Antimicrobial peptides (333 aa).

The first 23 residues, 1–23, serve as a signal peptide directing secretion; the sequence is MVQKGVVFGVLLILFICSTLTSA. A disordered region spans residues 23-52; that stretch reads ADSKPNPTKEEEPAKKPDEVSVKSGGPEVS. A propeptide spans 24–54 (acidic peptide 1); the sequence is DSKPNPTKEEEPAKKPDEVSVKSGGPEVSED. Residues 29–43 are compositionally biased toward basic and acidic residues; the sequence is PTKEEEPAKKPDEVS. Pyrrolidone carboxylic acid is present on Q55. Intrachain disulfides connect C60–C70 and C61–C74. The propeptide at 75–102 is acidic peptide 2; the sequence is ANAEEAAAAIPEASEELAQEEAPVYSED. The residue at position 103 (Q103) is a Pyrrolidone carboxylic acid. 2 disulfide bridges follow: C108/C118 and C109/C122. Positions 123–148 are cleaved as a propeptide — acidic peptide 3; it reads QNAEEAAAAIPEATEKAQEAPVYSED. Q149 carries the pyrrolidone carboxylic acid modification. Disulfide bonds link C154/C164 and C155/C168. The propeptide at 169–196 is acidic peptide 4; it reads QNAEEAAAAVAIPEASEKAQEGPVYSED. Position 197 is a pyrrolidone carboxylic acid (Q197). Intrachain disulfides connect C202-C212 and C203-C216. Positions 217 to 232 are cleaved as a propeptide — acidic peptide 5; sequence SNAADEVATPEDVEPG. At Q233 the chain carries Pyrrolidone carboxylic acid. Cystine bridges form between C238/C248 and C239/C252. Residues 253–278 constitute a propeptide, acidic peptide 6; that stretch reads HNAAEEATLKAFEEEAAREQPVYSED. The residue at position 279 (Q279) is a Pyrrolidone carboxylic acid. Disulfide bonds link C284-C294 and C285-C298. The propeptide at 299-333 is acidic peptide 7; sequence QSAEEAAAFQAGEVTASLMLIMFKACPCMGPVPSV.

The N-terminal of all peptides are blocked. In terms of processing, the 4 cysteine residues of all peptides are involved in intrachain disulfide bonds.

Its subcellular location is the secreted. Functionally, plays a role in the defense of the germinating seed against microorganisms, by inhibiting the growth of a range of filamentous fungi and bacteria, especially Gram-positive bacteria. Not cytotoxic for cultured human cells and are the smallest known plant-derived antimicrobial peptides. Peptide IB-AMP4 has a higher antifungal activity than IB-AMP1. This is Antimicrobial peptides (AMP) from Impatiens balsamina (Balsam).